Reading from the N-terminus, the 212-residue chain is Adenylate kinase (212 aa).

10 to 15 (GAGKGT) is a binding site for ATP. The NMP stretch occupies residues 30–59 (STGDMFRAAMVNQTEMGVLAKSYIDKGELV). AMP is bound by residues threonine 31, arginine 36, 57–59 (ELV), 86–89 (GYPR), and glutamine 93. Residues 127–159 (GRIIHRVTGETFHKVFNPPVDYKEEDYYQREDD) form an LID region. ATP-binding positions include arginine 128 and 137-138 (TF). AMP is bound by residues arginine 156 and arginine 167. Residue glutamine 195 participates in ATP binding.

It belongs to the adenylate kinase family. Monomer.

The protein localises to the cytoplasm. The enzyme catalyses AMP + ATP = 2 ADP. It participates in purine metabolism; AMP biosynthesis via salvage pathway; AMP from ADP: step 1/1. Its function is as follows. Catalyzes the reversible transfer of the terminal phosphate group between ATP and AMP. Plays an important role in cellular energy homeostasis and in adenine nucleotide metabolism. In Streptococcus pneumoniae (strain 70585), this protein is Adenylate kinase.